Here is a 67-residue protein sequence, read N- to C-terminus: Cysteine-rich venom protein bucarin (67 aa).

Positions 13 to 58 constitute an SCP domain; sequence VDKHNALRRSVRPTARNMLQMEWNSNAAQNAKRFADRCTFAHSPPH.

It belongs to the CRISP family. Contains 8 disulfide bonds. In terms of tissue distribution, expressed by the venom gland.

The protein localises to the secreted. Its function is as follows. Blocks contraction of smooth muscle elicited by high potassium-induced depolarization, but does not block caffeine-stimulated contraction. May target voltage-gated calcium channels on smooth muscle. The chain is Cysteine-rich venom protein bucarin from Bungarus candidus (Malayan krait).